An 871-amino-acid chain; its full sequence is Protein translocase subunit SecA (871 aa).

ATP contacts are provided by residues Gln-80, 98-102 (GEGKT), and Asp-537. A disordered region spans residues 852-871 (MEKGKKKGGSHGLGKIRVKR). Residues 855–871 (GKKKGGSHGLGKIRVKR) are compositionally biased toward basic residues.

This sequence belongs to the SecA family. Monomer and homodimer. Part of the essential Sec protein translocation apparatus which comprises SecA, SecYEG and auxiliary proteins SecDF. Other proteins may also be involved.

It localises to the cell inner membrane. It is found in the cytoplasm. It carries out the reaction ATP + H2O + cellular proteinSide 1 = ADP + phosphate + cellular proteinSide 2.. Functionally, part of the Sec protein translocase complex. Interacts with the SecYEG preprotein conducting channel. Has a central role in coupling the hydrolysis of ATP to the transfer of proteins into and across the cell membrane, serving as an ATP-driven molecular motor driving the stepwise translocation of polypeptide chains across the membrane. In Thermotoga neapolitana (strain ATCC 49049 / DSM 4359 / NBRC 107923 / NS-E), this protein is Protein translocase subunit SecA.